The following is a 315-amino-acid chain: Probable cell division protein WhiA (315 aa).

The H-T-H motif DNA-binding region spans Ser280–Thr313.

The protein belongs to the WhiA family.

Its function is as follows. Involved in cell division and chromosome segregation. The sequence is that of Probable cell division protein WhiA from Clostridium botulinum (strain Alaska E43 / Type E3).